The chain runs to 43 residues: Photosystem I reaction center subunit IX (43 aa).

The chain crosses the membrane as a helical span at residues 7-27 (YLSVAPVLSTLWFGSLAGLLI).

This sequence belongs to the PsaJ family.

The protein resides in the plastid. It localises to the chloroplast thylakoid membrane. Functionally, may help in the organization of the PsaE and PsaF subunits. The protein is Photosystem I reaction center subunit IX of Aethionema cordifolium (Lebanon stonecress).